We begin with the raw amino-acid sequence, 351 residues long: Phosphoribosylformylglycinamidine cyclo-ligase (351 aa).

The protein belongs to the AIR synthase family.

It localises to the cytoplasm. It carries out the reaction 2-formamido-N(1)-(5-O-phospho-beta-D-ribosyl)acetamidine + ATP = 5-amino-1-(5-phospho-beta-D-ribosyl)imidazole + ADP + phosphate + H(+). The protein operates within purine metabolism; IMP biosynthesis via de novo pathway; 5-amino-1-(5-phospho-D-ribosyl)imidazole from N(2)-formyl-N(1)-(5-phospho-D-ribosyl)glycinamide: step 2/2. The sequence is that of Phosphoribosylformylglycinamidine cyclo-ligase from Oleidesulfovibrio alaskensis (strain ATCC BAA-1058 / DSM 17464 / G20) (Desulfovibrio alaskensis).